The chain runs to 431 residues: Probable amino-acid ABC transporter periplasmic-binding protein y4oP (431 aa).

The N-terminal stretch at 1-25 (MKRRTFTAGLAALPFLGSSLTRAFA) is a signal peptide.

Belongs to the bacterial solute-binding protein 1 family.

The protein localises to the periplasm. Functionally, probably part of the binding-protein-dependent transport system y4oPQRS. This system probably transports a sugar-like molecule. This is Probable amino-acid ABC transporter periplasmic-binding protein y4oP from Sinorhizobium fredii (strain NBRC 101917 / NGR234).